The sequence spans 388 residues: Lipid-A-disaccharide synthase (388 aa).

Belongs to the LpxB family.

The enzyme catalyses a lipid X + a UDP-2-N,3-O-bis[(3R)-3-hydroxyacyl]-alpha-D-glucosamine = a lipid A disaccharide + UDP + H(+). The protein operates within bacterial outer membrane biogenesis; LPS lipid A biosynthesis. Functionally, condensation of UDP-2,3-diacylglucosamine and 2,3-diacylglucosamine-1-phosphate to form lipid A disaccharide, a precursor of lipid A, a phosphorylated glycolipid that anchors the lipopolysaccharide to the outer membrane of the cell. This Burkholderia mallei (strain NCTC 10247) protein is Lipid-A-disaccharide synthase.